Reading from the N-terminus, the 365-residue chain is Aminomethyltransferase (365 aa).

The protein belongs to the GcvT family. The glycine cleavage system is composed of four proteins: P, T, L and H.

The catalysed reaction is N(6)-[(R)-S(8)-aminomethyldihydrolipoyl]-L-lysyl-[protein] + (6S)-5,6,7,8-tetrahydrofolate = N(6)-[(R)-dihydrolipoyl]-L-lysyl-[protein] + (6R)-5,10-methylene-5,6,7,8-tetrahydrofolate + NH4(+). In terms of biological role, the glycine cleavage system catalyzes the degradation of glycine. The sequence is that of Aminomethyltransferase from Chlorobium phaeovibrioides (strain DSM 265 / 1930) (Prosthecochloris vibrioformis (strain DSM 265)).